The following is a 1089-amino-acid chain: Importin subunit beta-3 (1089 aa).

At serine 2 the chain carries N-acetylserine. 24 HEAT repeats span residues 6 to 39 (EEVNRTLLQIVQAFASPDNQIRSVAEKALSEEWI), 44 to 78 (IEYLLTFLAEQAAFSQDTTVAALSAVLFRKLALKA), 96 to 129 (KEVLAQIRSSLLKGFLSERADSIRHKLSDAIAEC), 138 to 165 (PELLQALIESLKSGNPNFRESSFRILTT), 175 to 207 (INSILPIFQSGFTDASDNVKIAAVTAFVGYFKQ), 216 to 252 (LGILLPSLLNSLPRFLDDGKDDALASVFESLIELVEL), 260 to 295 (MFDQIIQFTDMVIKNKDLEPPARTTALELLTVFSEN), 304 to 359 (QNYG…ALKL), 361 to 395 (GEYLAAPLFQYLQQMITSTEWRERFAAMMALSSAA), 399 to 439 (ADVL…STDF), 441 to 481 (PFIQ…FSEF), 484 to 524 (KDIL…AEAA), 526 to 568 (NKFI…GFAV), 571 to 613 (EKFH…CRIL), 615 to 689 (DDFV…ATLL), 692 to 735 (QFAV…LLAA), 742 to 781 (ELVLLWHKASSKLIGGLMSEPMPEITQVYHNSLVNGIKVM), 788 to 849 (EDQL…LKTT), 852 to 890 (HYLKNLENIWPMINTFLLDNEPILVIFALVVIGDLIQYG), 898 to 930 (KNAFIPKVTECLISPDARIRQAASYIIGVCAQY), 938 to 978 (VCIP…LYAY), 986 to 1017 (DTYTANWFKTLPTITDKEAASFNYQFLSQLIE), 1028 to 1063 (NISAVVDSVIQALNERSLTEREGQTVISSVKKLLGF), and 1066 to 1089 (SSDAMAIFNRYPADIMEKVHKWFA). At threonine 830 the chain carries Phosphothreonine.

It belongs to the importin beta family. Importin beta-3 subfamily. In terms of assembly, interacts with Ran (GSP1); interacts specifically with the GTP-bound form of Ran (GTP-Ran), protecting it from GTP hydrolysis and nucleotide exchange. Interacts with RPL25; this interaction is dissociated by binding to Ran-GTP. Interacts with YAP1; this interaction is dissociated by binding to Ran-GTP. Interacts with NOP1; via its rg-NLS. Interacts with SOF1; via its cNLS. Interacts with histones H3 and H4; via their NLS. Interacts with ABF1.

It localises to the cytoplasm. Its subcellular location is the nucleus. Functionally, functions in nuclear protein import as nuclear transport receptor. Serves as receptor for classical and arginine/glycine-rich nuclear localization signals (cNLS and rg-NLS) in cargo substrates. Its predominant cargo substrate seems to be ribosomal proteins and ribosome biogenesis trans- and cis-acting factors. Required for nuclear transport of YAP1, NOP1 and SOF1. Mediates the nuclear import of histones H3 and H4. Mediates docking of the importin/substrate complex to the nuclear pore complex (NPC) through binding to repeat-containing nucleoporins. The complex is subsequently translocated through the pore by an energy requiring, Ran-dependent mechanism. At the nucleoplasmic side of the NPC, GTP-Ran binding leads to release of the cargo. The importin is re-exported from the nucleus to the cytoplasm where GTP hydrolysis releases Ran from importin. The directionality of nuclear import is thought to be conferred by an asymmetric distribution of the GTP- and GDP-bound forms of Ran between the cytoplasm and nucleus. Plays a role in protein secretion. The polypeptide is Importin subunit beta-3 (Saccharomyces cerevisiae (strain ATCC 204508 / S288c) (Baker's yeast)).